A 367-amino-acid chain; its full sequence is 3-methyl-2-oxobutanoate dehydrogenase subunit alpha (367 aa).

Residues Gln-99 to Arg-101, Pro-141 to Ile-142, Gly-170 to Glu-176, Asn-200 to Ile-204, and His-269 contribute to the thiamine diphosphate site. Tyr-100 contacts substrate. Mg(2+) is bound by residues Asp-171 and Asn-200.

Heteromer of E1 alpha (BkdA) and beta (BkdB) subunits. Part of the BCKADH complex, consisting of multiple copies of BkdA/BkdB (E1), BkdC (E2) and Lpd (E3). Mg(2+) serves as cofactor. Thiamine diphosphate is required as a cofactor.

The catalysed reaction is N(6)-[(R)-lipoyl]-L-lysyl-[protein] + 3-methyl-2-oxobutanoate + H(+) = N(6)-[(R)-S(8)-2-methylpropanoyldihydrolipoyl]-L-lysyl-[protein] + CO2. In terms of biological role, component of the branched-chain alpha-ketoacid dehydrogenase (BCKADH) complex, that catalyzes the overall conversion of branched-chain alpha-ketoacids to acyl-CoA and CO(2). The protein is 3-methyl-2-oxobutanoate dehydrogenase subunit alpha (bkdA) of Mycobacterium tuberculosis (strain CDC 1551 / Oshkosh).